The chain runs to 309 residues: Protein FdhE (309 aa).

This sequence belongs to the FdhE family.

Its subcellular location is the cytoplasm. Its function is as follows. Necessary for formate dehydrogenase activity. This is Protein FdhE from Shigella boydii serotype 18 (strain CDC 3083-94 / BS512).